Here is a 130-residue protein sequence, read N- to C-terminus: Small ribosomal subunit protein eS17 (130 aa).

Residues 74–84 show a composition bias toward basic and acidic residues; that stretch reads QEEERERRDNY. The segment at 74-97 is disordered; the sequence is QEEERERRDNYMPEISTVDPSQLT.

This sequence belongs to the eukaryotic ribosomal protein eS17 family.

This is Small ribosomal subunit protein eS17 (rps-17) from Caenorhabditis elegans.